A 96-amino-acid polypeptide reads, in one-letter code: Co-chaperonin GroES (96 aa).

It belongs to the GroES chaperonin family. Heptamer of 7 subunits arranged in a ring. Interacts with the chaperonin GroEL.

Its subcellular location is the cytoplasm. Together with the chaperonin GroEL, plays an essential role in assisting protein folding. The GroEL-GroES system forms a nano-cage that allows encapsulation of the non-native substrate proteins and provides a physical environment optimized to promote and accelerate protein folding. GroES binds to the apical surface of the GroEL ring, thereby capping the opening of the GroEL channel. This Halorhodospira halophila (strain DSM 244 / SL1) (Ectothiorhodospira halophila (strain DSM 244 / SL1)) protein is Co-chaperonin GroES.